A 252-amino-acid polypeptide reads, in one-letter code: DNA repair protein RecO (252 aa).

Belongs to the RecO family.

Involved in DNA repair and RecF pathway recombination. This Rhodospirillum rubrum (strain ATCC 11170 / ATH 1.1.1 / DSM 467 / LMG 4362 / NCIMB 8255 / S1) protein is DNA repair protein RecO.